A 405-amino-acid chain; its full sequence is LanC-like protein GCL2 (405 aa).

Residues Cys278, Cys323, and His324 each contribute to the Zn(2+) site.

Belongs to the LanC-like protein family.

In terms of biological role, may play a role in signaling. May be not involved in abscisic acid (ABA) signaling. In Arabidopsis thaliana (Mouse-ear cress), this protein is LanC-like protein GCL2 (GCL2).